The primary structure comprises 145 residues: Ribosome-binding factor A (145 aa).

The disordered stretch occupies residues 126–145 (RDLDTETDAEAGSETTKEED). Over residues 130–145 (TETDAEAGSETTKEED) the composition is skewed to acidic residues.

Belongs to the RbfA family. As to quaternary structure, monomer. Binds 30S ribosomal subunits, but not 50S ribosomal subunits or 70S ribosomes.

Its subcellular location is the cytoplasm. Functionally, one of several proteins that assist in the late maturation steps of the functional core of the 30S ribosomal subunit. Associates with free 30S ribosomal subunits (but not with 30S subunits that are part of 70S ribosomes or polysomes). Required for efficient processing of 16S rRNA. May interact with the 5'-terminal helix region of 16S rRNA. In Azorhizobium caulinodans (strain ATCC 43989 / DSM 5975 / JCM 20966 / LMG 6465 / NBRC 14845 / NCIMB 13405 / ORS 571), this protein is Ribosome-binding factor A.